Here is a 540-residue protein sequence, read N- to C-terminus: 2,3-bisphosphoglycerate-independent phosphoglycerate mutase (540 aa).

Positions 24 and 74 each coordinate Mn(2+). Ser74 serves as the catalytic Phosphoserine intermediate. Residues His135, 165–166, Arg197, Arg203, 268–271, and Lys341 each bind substrate; these read RD and RPDR. Mn(2+) is bound by residues Asp408, His412, Asp449, His450, and His467.

Belongs to the BPG-independent phosphoglycerate mutase family. Monomer. Mn(2+) is required as a cofactor.

The catalysed reaction is (2R)-2-phosphoglycerate = (2R)-3-phosphoglycerate. Its pathway is carbohydrate degradation; glycolysis; pyruvate from D-glyceraldehyde 3-phosphate: step 3/5. Catalyzes the interconversion of 2-phosphoglycerate and 3-phosphoglycerate. The protein is 2,3-bisphosphoglycerate-independent phosphoglycerate mutase of Prochlorococcus marinus (strain SARG / CCMP1375 / SS120).